We begin with the raw amino-acid sequence, 395 residues long: Elongation factor Tu (395 aa).

In terms of domain architecture, tr-type G spans 10-205; the sequence is KPHVNIGTIG…AVDSYIPMPE (196 aa). The G1 stretch occupies residues 19–26; the sequence is GHIDHGKT. 19 to 26 contributes to the GTP binding site; the sequence is GHIDHGKT. Thr26 lines the Mg(2+) pocket. The segment at 61 to 65 is G2; the sequence is GITIA. The interval 82 to 85 is G3; that stretch reads DCPG. Residues 82 to 86 and 137 to 140 contribute to the GTP site; these read DCPGH and NKVD. Positions 137–140 are G4; sequence NKVD. A G5 region spans residues 175 to 177; sequence SAL.

This sequence belongs to the TRAFAC class translation factor GTPase superfamily. Classic translation factor GTPase family. EF-Tu/EF-1A subfamily. Monomer.

The protein localises to the cytoplasm. The enzyme catalyses GTP + H2O = GDP + phosphate + H(+). Functionally, GTP hydrolase that promotes the GTP-dependent binding of aminoacyl-tRNA to the A-site of ribosomes during protein biosynthesis. This chain is Elongation factor Tu, found in Solibacter usitatus (strain Ellin6076).